The primary structure comprises 256 residues: Imidazole glycerol phosphate synthase subunit HisF (256 aa).

Residues Asp-12 and Asp-131 contribute to the active site.

It belongs to the HisA/HisF family. Heterodimer of HisH and HisF.

It localises to the cytoplasm. It catalyses the reaction 5-[(5-phospho-1-deoxy-D-ribulos-1-ylimino)methylamino]-1-(5-phospho-beta-D-ribosyl)imidazole-4-carboxamide + L-glutamine = D-erythro-1-(imidazol-4-yl)glycerol 3-phosphate + 5-amino-1-(5-phospho-beta-D-ribosyl)imidazole-4-carboxamide + L-glutamate + H(+). The protein operates within amino-acid biosynthesis; L-histidine biosynthesis; L-histidine from 5-phospho-alpha-D-ribose 1-diphosphate: step 5/9. Functionally, IGPS catalyzes the conversion of PRFAR and glutamine to IGP, AICAR and glutamate. The HisF subunit catalyzes the cyclization activity that produces IGP and AICAR from PRFAR using the ammonia provided by the HisH subunit. The protein is Imidazole glycerol phosphate synthase subunit HisF of Pseudomonas syringae pv. tomato (strain ATCC BAA-871 / DC3000).